A 166-amino-acid polypeptide reads, in one-letter code: Small ribosomal subunit protein uS5 (166 aa).

Residues 12-75 enclose the S5 DRBM domain; sequence YIEKLVQVNR…EAARRNMIQV (64 aa).

It belongs to the universal ribosomal protein uS5 family. As to quaternary structure, part of the 30S ribosomal subunit. Contacts proteins S4 and S8.

Its function is as follows. With S4 and S12 plays an important role in translational accuracy. Functionally, located at the back of the 30S subunit body where it stabilizes the conformation of the head with respect to the body. This chain is Small ribosomal subunit protein uS5, found in Pseudomonas fluorescens (strain Pf0-1).